The primary structure comprises 595 residues: Elongation factor 4 (595 aa).

Residues 2–183 form the tr-type G domain; sequence KNIRNFCIIA…TIVEKVPAPK (182 aa). GTP contacts are provided by residues 14-19 and 130-133; these read DHGKST and NKID.

Belongs to the TRAFAC class translation factor GTPase superfamily. Classic translation factor GTPase family. LepA subfamily.

The protein localises to the cell inner membrane. The catalysed reaction is GTP + H2O = GDP + phosphate + H(+). Its function is as follows. Required for accurate and efficient protein synthesis under certain stress conditions. May act as a fidelity factor of the translation reaction, by catalyzing a one-codon backward translocation of tRNAs on improperly translocated ribosomes. Back-translocation proceeds from a post-translocation (POST) complex to a pre-translocation (PRE) complex, thus giving elongation factor G a second chance to translocate the tRNAs correctly. Binds to ribosomes in a GTP-dependent manner. This is Elongation factor 4 from Parabacteroides distasonis (strain ATCC 8503 / DSM 20701 / CIP 104284 / JCM 5825 / NCTC 11152).